We begin with the raw amino-acid sequence, 404 residues long: Cytoplasmic tRNA 2-thiolation protein 2 (404 aa).

The protein belongs to the CTU2/NCS2 family.

The protein localises to the cytoplasm. Its pathway is tRNA modification; 5-methoxycarbonylmethyl-2-thiouridine-tRNA biosynthesis. In terms of biological role, plays a central role in 2-thiolation of mcm(5)S(2)U at tRNA wobble positions of tRNA(Lys), tRNA(Glu) and tRNA(Gln). May act by forming a heterodimer with NCS6/CTU1 that ligates sulfur from thiocarboxylated URM1 onto the uridine of tRNAs at wobble position. In Drosophila mojavensis (Fruit fly), this protein is Cytoplasmic tRNA 2-thiolation protein 2.